The chain runs to 260 residues: Hydroxypyruvate/pyruvate aldolase Bphyt_0320 (260 aa).

The active-site Proton acceptor is His48. A divalent metal cation is bound by residues Glu157 and Asp183.

Belongs to the HpcH/HpaI aldolase family. Requires Mn(2+) as cofactor. The cofactor is Mg(2+). Co(2+) serves as cofactor.

The enzyme catalyses D-glyceraldehyde + 3-hydroxypyruvate = 2-dehydro-D-gluconate. It carries out the reaction D-glyceraldehyde + pyruvate = 2-dehydro-3-deoxy-L-galactonate. The catalysed reaction is 2-dehydro-3-deoxy-D-gluconate = D-glyceraldehyde + pyruvate. In terms of biological role, aldolase which can catalyze in vitro the aldolisation reaction between hydroxypyruvate (HPA) or pyruvate (PA) and D-glyceraldehyde (D-GA). The condensation of hydroxypyruvate and D-glyceraldehyde produces 2-dehydro-D-gluconate. The condensation of pyruvate and D-glyceraldehyde produces 2-dehydro-3-deoxy-L-galactonate as the major product and 2-dehydro-3-deoxy-D-gluconate. Also catalyzes the retro-aldol type decarboxylation of oxaloacetate, a general property of known pyruvate aldolases. The chain is Hydroxypyruvate/pyruvate aldolase Bphyt_0320 from Paraburkholderia phytofirmans (strain DSM 17436 / LMG 22146 / PsJN) (Burkholderia phytofirmans).